A 450-amino-acid polypeptide reads, in one-letter code: uncharacterized protein (450 aa).

Helical transmembrane passes span 10–30 (IIVL…LVIA), 53–73 (LGGG…AIAI), 95–115 (TAGN…LFAI), 120–140 (LLPV…SIFN), 148–168 (AVAC…PVGF), 199–219 (LAML…IFIT), 242–262 (IANI…ATFA), 267–287 (TSST…CGIF), 302–322 (LMAM…VINA), 343–363 (IAAL…GSSF), 378–398 (LSFG…AALG), and 428–448 (VVPT…IAAM).

Its subcellular location is the cell membrane. This is an uncharacterized protein from Haemophilus influenzae (strain ATCC 51907 / DSM 11121 / KW20 / Rd).